Here is a 565-residue protein sequence, read N- to C-terminus: uncharacterized protein (565 aa).

Helical transmembrane passes span 4–26, 33–55, 68–90, 97–119, and 162–184; these read FVQF…AVWV, GYGL…VGAA, SLLY…VNAL, YAIL…TQFF, and ISAM…IILL. RCK C-terminal domains follow at residues 210 to 295 and 296 to 379; these read PNVD…LGPE and VPDA…IFGV. The next 5 membrane-spanning stretches (helical) occupy residues 389–411, 415–432, 453–472, 482–504, and 539–561; these read LLTL…PAFG, GLGN…VSSI, LGLI…DLLT, IFIV…GFHI, and WLGF…YFAM.

This sequence belongs to the AAE transporter (TC 2.A.81) family.

Its subcellular location is the cell membrane. This is an uncharacterized protein from Bordetella parapertussis (strain 12822 / ATCC BAA-587 / NCTC 13253).